The sequence spans 251 residues: Ubiquinone/menaquinone biosynthesis C-methyltransferase UbiE (251 aa).

Residues T74, D95, 123-124, and S140 contribute to the S-adenosyl-L-methionine site; that span reads NA.

The protein belongs to the class I-like SAM-binding methyltransferase superfamily. MenG/UbiE family.

The catalysed reaction is a 2-demethylmenaquinol + S-adenosyl-L-methionine = a menaquinol + S-adenosyl-L-homocysteine + H(+). It carries out the reaction a 2-methoxy-6-(all-trans-polyprenyl)benzene-1,4-diol + S-adenosyl-L-methionine = a 5-methoxy-2-methyl-3-(all-trans-polyprenyl)benzene-1,4-diol + S-adenosyl-L-homocysteine + H(+). Its pathway is quinol/quinone metabolism; menaquinone biosynthesis; menaquinol from 1,4-dihydroxy-2-naphthoate: step 2/2. It functions in the pathway cofactor biosynthesis; ubiquinone biosynthesis. In terms of biological role, methyltransferase required for the conversion of demethylmenaquinol (DMKH2) to menaquinol (MKH2) and the conversion of 2-polyprenyl-6-methoxy-1,4-benzoquinol (DDMQH2) to 2-polyprenyl-3-methyl-6-methoxy-1,4-benzoquinol (DMQH2). This chain is Ubiquinone/menaquinone biosynthesis C-methyltransferase UbiE, found in Escherichia coli O9:H4 (strain HS).